The primary structure comprises 451 residues: Bifunctional protein GlmU (451 aa).

The interval 1–225 (MVVVAILAAG…YQEILGINDR (225 aa)) is pyrophosphorylase. Residues 7–10 (LAAG), Lys-21, Gln-72, and 77–78 (GT) each bind UDP-N-acetyl-alpha-D-glucosamine. Residue Asp-102 participates in Mg(2+) binding. UDP-N-acetyl-alpha-D-glucosamine contacts are provided by Gly-139, Glu-154, Asn-169, and Asn-223. Asn-223 is a Mg(2+) binding site. Residues 226-246 (LQLATAYEILQRRVKEQWMMA) form a linker region. Residues 247 to 451 (GVTLIDPNSI…PGWRKKSGES (205 aa)) are N-acetyltransferase. 2 residues coordinate UDP-N-acetyl-alpha-D-glucosamine: Arg-328 and Lys-346. The active-site Proton acceptor is the His-358. The UDP-N-acetyl-alpha-D-glucosamine site is built by Tyr-361 and Asn-372. Acetyl-CoA contacts are provided by residues Ala-375, 381 to 382 (NY), Ser-400, Ala-418, and Arg-435.

This sequence in the N-terminal section; belongs to the N-acetylglucosamine-1-phosphate uridyltransferase family. It in the C-terminal section; belongs to the transferase hexapeptide repeat family. As to quaternary structure, homotrimer. Requires Mg(2+) as cofactor.

It is found in the cytoplasm. The enzyme catalyses alpha-D-glucosamine 1-phosphate + acetyl-CoA = N-acetyl-alpha-D-glucosamine 1-phosphate + CoA + H(+). It carries out the reaction N-acetyl-alpha-D-glucosamine 1-phosphate + UTP + H(+) = UDP-N-acetyl-alpha-D-glucosamine + diphosphate. Its pathway is nucleotide-sugar biosynthesis; UDP-N-acetyl-alpha-D-glucosamine biosynthesis; N-acetyl-alpha-D-glucosamine 1-phosphate from alpha-D-glucosamine 6-phosphate (route II): step 2/2. It participates in nucleotide-sugar biosynthesis; UDP-N-acetyl-alpha-D-glucosamine biosynthesis; UDP-N-acetyl-alpha-D-glucosamine from N-acetyl-alpha-D-glucosamine 1-phosphate: step 1/1. It functions in the pathway bacterial outer membrane biogenesis; LPS lipid A biosynthesis. Its function is as follows. Catalyzes the last two sequential reactions in the de novo biosynthetic pathway for UDP-N-acetylglucosamine (UDP-GlcNAc). The C-terminal domain catalyzes the transfer of acetyl group from acetyl coenzyme A to glucosamine-1-phosphate (GlcN-1-P) to produce N-acetylglucosamine-1-phosphate (GlcNAc-1-P), which is converted into UDP-GlcNAc by the transfer of uridine 5-monophosphate (from uridine 5-triphosphate), a reaction catalyzed by the N-terminal domain. This chain is Bifunctional protein GlmU, found in Trichormus variabilis (strain ATCC 29413 / PCC 7937) (Anabaena variabilis).